Reading from the N-terminus, the 199-residue chain is Small ribosomal subunit protein uS7 (199 aa).

The protein belongs to the universal ribosomal protein uS7 family. As to quaternary structure, part of the 30S ribosomal subunit.

In terms of biological role, one of the primary rRNA binding proteins, it binds directly to 16S rRNA where it nucleates assembly of the head domain of the 30S subunit. Is located at the subunit interface close to the decoding center. This Cenarchaeum symbiosum (strain A) protein is Small ribosomal subunit protein uS7.